We begin with the raw amino-acid sequence, 330 residues long: Electron transfer flavoprotein subunit alpha (330 aa).

Residue 270 to 298 (LYIACGISGAIQHLAGMSNSGTIVAINKN) coordinates FAD.

The protein belongs to the ETF alpha-subunit/FixB family. As to quaternary structure, heterodimer of an alpha and a beta subunit. The cofactor is FAD.

Its function is as follows. The electron transfer flavoprotein serves as a specific electron acceptor for other dehydrogenases. It transfers the electrons to the main respiratory chain via ETF-ubiquinone oxidoreductase (ETF dehydrogenase). The sequence is that of Electron transfer flavoprotein subunit alpha (etfA) from Thermoanaerobacterium thermosaccharolyticum (strain ATCC 7956 / DSM 571 / NCIMB 9385 / NCA 3814 / NCTC 13789 / WDCM 00135 / 2032) (Clostridium thermosaccharolyticum).